The primary structure comprises 230 residues: Ion-translocating oxidoreductase complex subunit E (230 aa).

Helical transmembrane passes span 18–38 (ALVQLLGLCPLLAVSSTITNA), 39–59 (LGLGIATLLVLVGSNVTVSLI), 69–89 (IPVFVMIIASLVTCVQLLMNA), 93–113 (GLYLSLGIFIPLIVTNCIIIG), 124–144 (VLPAALDGLWMGLGMTSVLVV), and 182–202 (SFLLALLPPGAFIGVGLLIAL).

It belongs to the NqrDE/RnfAE family. In terms of assembly, the complex is composed of six subunits: RnfA, RnfB, RnfC, RnfD, RnfE and RnfG.

It is found in the cell inner membrane. Part of a membrane-bound complex that couples electron transfer with translocation of ions across the membrane. This chain is Ion-translocating oxidoreductase complex subunit E, found in Vibrio parahaemolyticus serotype O3:K6 (strain RIMD 2210633).